A 783-amino-acid chain; its full sequence is Tricorn protease-interacting factor F2 (783 aa).

Residues glutamate 107 and 236-240 (GAMEN) each bind substrate. Histidine 271 contributes to the Zn(2+) binding site. Glutamate 272 acts as the Proton acceptor in catalysis. 2 residues coordinate Zn(2+): histidine 275 and glutamate 294.

Belongs to the peptidase M1 family. Monomer. Part of the Tricorn proteolytic complex. The cofactor is Zn(2+).

Its subcellular location is the cytoplasm. In terms of biological role, proteases F1, F2 and F3 degrade oligopeptides produced by Tricorn (themselves probably produced by the proteasome), yielding free amino acids. The protein is Tricorn protease-interacting factor F2 (trf2) of Thermoplasma volcanium (strain ATCC 51530 / DSM 4299 / JCM 9571 / NBRC 15438 / GSS1).